Here is a 203-residue protein sequence, read N- to C-terminus: Holliday junction branch migration complex subunit RuvA (203 aa).

Residues 1-64 (MIGRLRGTLA…EDAQLLYGFI (64 aa)) form a domain I region. The domain II stretch occupies residues 65-143 (GKRDRDFFRE…AWEVVPSMFA (79 aa)). Residues 144–154 (LVPNQPDMPAG) are flexible linker. The segment at 155 to 203 (QVASAESDAVSALISLGYKPQEASKAVSAIKDKNLSSEDMIRRALKGMI) is domain III.

The protein belongs to the RuvA family. In terms of assembly, homotetramer. Forms an RuvA(8)-RuvB(12)-Holliday junction (HJ) complex. HJ DNA is sandwiched between 2 RuvA tetramers; dsDNA enters through RuvA and exits via RuvB. An RuvB hexamer assembles on each DNA strand where it exits the tetramer. Each RuvB hexamer is contacted by two RuvA subunits (via domain III) on 2 adjacent RuvB subunits; this complex drives branch migration. In the full resolvosome a probable DNA-RuvA(4)-RuvB(12)-RuvC(2) complex forms which resolves the HJ.

The protein localises to the cytoplasm. Functionally, the RuvA-RuvB-RuvC complex processes Holliday junction (HJ) DNA during genetic recombination and DNA repair, while the RuvA-RuvB complex plays an important role in the rescue of blocked DNA replication forks via replication fork reversal (RFR). RuvA specifically binds to HJ cruciform DNA, conferring on it an open structure. The RuvB hexamer acts as an ATP-dependent pump, pulling dsDNA into and through the RuvAB complex. HJ branch migration allows RuvC to scan DNA until it finds its consensus sequence, where it cleaves and resolves the cruciform DNA. This Pseudomonas fluorescens (strain SBW25) protein is Holliday junction branch migration complex subunit RuvA.